Here is a 119-residue protein sequence, read N- to C-terminus: Single-stranded DNA-binding protein (119 aa).

Residues 3 to 102 (INIVTLVGRV…IRVDQLELLG (100 aa)) enclose the SSB domain.

In terms of assembly, homotetramer.

This Anabaena variabilis protein is Single-stranded DNA-binding protein (ssb1).